We begin with the raw amino-acid sequence, 189 residues long: MTEYKLVVVGAGGVGKSALTIQLIQNHFVDEYDPTIEDSYRKQVVIDGETCLLDILDTAGQEEYSAMRDQYMRTGEGFLCVFAINNSKSFADINAYREQIKRVKDSDDVPMVLVGNKCDLPSRTVDTKQAQELARSYGIPFIETSAKTRQGVEDAFYTLVREIHQYRMKKLDSSEDNNQGCIRIPCKLM.

10–17 contacts GTP; the sequence is GAGGVGKS. Positions 32 to 40 match the Effector region motif; that stretch reads YDPTIEDSY. Residues 57 to 61 and 116 to 119 each bind GTP; these read DTAGQ and NKCD. Residues 166–185 form a hypervariable region region; sequence YRMKKLDSSEDNNQGCIRIP. Cys-181 carries S-palmitoyl cysteine lipidation. Residue Cys-186 is the site of S-farnesyl cysteine attachment. The propeptide at 187–189 is removed in mature form; the sequence is KLM.

It belongs to the small GTPase superfamily. Ras family. In terms of processing, palmitoylated by the ZDHHC9-GOLGA7 complex. Depalmitoylated by abhd17a, abhd17b and abhd17c. A continuous cycle of de- and re-palmitoylation regulates rapid exchange between plasma membrane and Golgi.

The protein localises to the cell membrane. It is found in the golgi apparatus membrane. The enzyme catalyses GTP + H2O = GDP + phosphate + H(+). With respect to regulation, alternates between an inactive form bound to GDP and an active form bound to GTP. Activated by a guanine nucleotide-exchange factor (GEF) and inactivated by a GTPase-activating protein (GAP). Ras proteins bind GDP/GTP and possess intrinsic GTPase activity. This Xenopus laevis (African clawed frog) protein is GTPase NRas (nras).